A 213-amino-acid chain; its full sequence is Orotate phosphoribosyltransferase (213 aa).

A 5-phospho-alpha-D-ribose 1-diphosphate-binding site is contributed by lysine 26. Residue 34–35 (FF) coordinates orotate. Residues 72 to 73 (YK), arginine 99, lysine 100, lysine 103, histidine 105, and 124 to 132 (DDVITAGTA) contribute to the 5-phospho-alpha-D-ribose 1-diphosphate site. Orotate is bound by residues threonine 128 and arginine 156.

The protein belongs to the purine/pyrimidine phosphoribosyltransferase family. PyrE subfamily. Homodimer. It depends on Mg(2+) as a cofactor.

It catalyses the reaction orotidine 5'-phosphate + diphosphate = orotate + 5-phospho-alpha-D-ribose 1-diphosphate. The protein operates within pyrimidine metabolism; UMP biosynthesis via de novo pathway; UMP from orotate: step 1/2. Its function is as follows. Catalyzes the transfer of a ribosyl phosphate group from 5-phosphoribose 1-diphosphate to orotate, leading to the formation of orotidine monophosphate (OMP). In Pectobacterium carotovorum subsp. carotovorum (strain PC1), this protein is Orotate phosphoribosyltransferase.